A 164-amino-acid polypeptide reads, in one-letter code: C-phycoerythrin class 1 subunit alpha (164 aa).

2 residues coordinate (2R,3E)-phycoerythrobilin: Cys82 and Cys139.

Belongs to the phycobiliprotein family. In terms of assembly, heterodimer of an alpha and a beta chain. Post-translationally, contains one covalently linked bilin chromophore.

It is found in the cellular thylakoid membrane. Its function is as follows. Light-harvesting photosynthetic bile pigment-protein from the phycobiliprotein complex. This chain is C-phycoerythrin class 1 subunit alpha (cpeA), found in Synechococcus sp. (strain WH7803).